We begin with the raw amino-acid sequence, 523 residues long: Mediator of RNA polymerase II transcription subunit 1.2 (523 aa).

It belongs to the Mediator complex subunit 1 family. In terms of assembly, component of the Mediator complex.

The protein localises to the nucleus. In terms of biological role, component of the Mediator complex, a coactivator involved in the regulated transcription of nearly all RNA polymerase II-dependent genes. Mediator functions as a bridge to convey information from gene-specific regulatory proteins to the basal RNA polymerase II transcription machinery. Mediator is recruited to promoters by direct interactions with regulatory proteins and serves as a scaffold for the assembly of a functional preinitiation complex with RNA polymerase II and the general transcription factors. This Caenorhabditis briggsae protein is Mediator of RNA polymerase II transcription subunit 1.2 (mdt-1.2).